We begin with the raw amino-acid sequence, 775 residues long: DENN domain-containing protein 1B (775 aa).

Residues 14–143 (DLVLKVKCHA…YNHPVPKANT (130 aa)) form the uDENN domain. One can recognise a cDENN domain in the interval 180 to 316 (GLPTIPESRN…VVSALKNKLK (137 aa)). One can recognise a dDENN domain in the interval 318–395 (QSTATGDGVA…DGRLAKLNAG (78 aa)). The short motif at 398 to 402 (FSDVF) is the FXDXF motif element. Tyr-520 is modified (phosphotyrosine). 4 positions are modified to phosphoserine: Ser-535, Ser-536, Ser-549, and Ser-552. A Clathrin box motif is present at residues 566–575 (DLLGEILDTL). Disordered stretches follow at residues 635-654 (DSAL…VSSS) and 671-706 (HLGA…KRET). Positions 639 to 651 (HGKHLPPSPRKRV) are enriched in basic residues. A phosphoserine mark is found at Ser-652 and Ser-653. Positions 695–706 (QTDKGKTEKRET) are enriched in basic and acidic residues.

As to quaternary structure, interacts with RAB35. Interacts with clathrin heavy chain/CLTC. Interacts with components of the adapter protein complex 2 (AP-2) AP2A2 and AP2B1. Interacts with CD3E. Post-translationally, phosphorylated on serine and/or threonine, possibly regulating the guanine nucleotide exchange factor (GEF) activity. As to expression, highly expressed in dendritic and natural killer cells and at lower levels in other myeloid lineage cells and in pituitary. Significantly up-regulated in effector memory T-cells as compared with naive T-cells.

It localises to the cytoplasm. The protein resides in the cytosol. The protein localises to the cytoplasmic vesicle. Its subcellular location is the clathrin-coated vesicle. Guanine nucleotide exchange factor (GEF) for RAB35 that acts as a regulator of T-cell receptor (TCR) internalization in TH2 cells. Acts by promoting the exchange of GDP to GTP, converting inactive GDP-bound RAB35 into its active GTP-bound form. Plays a role in clathrin-mediated endocytosis. Controls cytokine production in TH2 lymphocytes by controlling the rate of TCR internalization and routing to endosomes: acts by mediating clathrin-mediated endocytosis of TCR via its interaction with the adapter protein complex 2 (AP-2) and GEF activity. Dysregulation leads to impaired TCR down-modulation and recycling, affecting cytokine production in TH2 cells. This chain is DENN domain-containing protein 1B, found in Homo sapiens (Human).